The primary structure comprises 739 residues: Phosphoribosylformylglycinamidine synthase subunit PurL (739 aa).

Residue H53 is part of the active site. The ATP site is built by Y56 and K95. E97 serves as a coordination point for Mg(2+). Substrate-binding positions include 98–101 (SHNH) and R120. H99 functions as the Proton acceptor in the catalytic mechanism. Position 121 (D121) interacts with Mg(2+). Q244 contacts substrate. Position 274 (D274) interacts with Mg(2+). 318 to 320 (ESQ) serves as a coordination point for substrate. ATP contacts are provided by D501 and G538. N539 lines the Mg(2+) pocket. S541 provides a ligand contact to substrate.

This sequence belongs to the FGAMS family. In terms of assembly, monomer. Part of the FGAM synthase complex composed of 1 PurL, 1 PurQ and 2 PurS subunits.

The protein localises to the cytoplasm. It carries out the reaction N(2)-formyl-N(1)-(5-phospho-beta-D-ribosyl)glycinamide + L-glutamine + ATP + H2O = 2-formamido-N(1)-(5-O-phospho-beta-D-ribosyl)acetamidine + L-glutamate + ADP + phosphate + H(+). It participates in purine metabolism; IMP biosynthesis via de novo pathway; 5-amino-1-(5-phospho-D-ribosyl)imidazole from N(2)-formyl-N(1)-(5-phospho-D-ribosyl)glycinamide: step 1/2. Functionally, part of the phosphoribosylformylglycinamidine synthase complex involved in the purines biosynthetic pathway. Catalyzes the ATP-dependent conversion of formylglycinamide ribonucleotide (FGAR) and glutamine to yield formylglycinamidine ribonucleotide (FGAM) and glutamate. The FGAM synthase complex is composed of three subunits. PurQ produces an ammonia molecule by converting glutamine to glutamate. PurL transfers the ammonia molecule to FGAR to form FGAM in an ATP-dependent manner. PurS interacts with PurQ and PurL and is thought to assist in the transfer of the ammonia molecule from PurQ to PurL. The polypeptide is Phosphoribosylformylglycinamidine synthase subunit PurL (Listeria monocytogenes serotype 4b (strain CLIP80459)).